The following is a 343-amino-acid chain: Heat-inducible transcription repressor HrcA (343 aa).

Belongs to the HrcA family.

Its function is as follows. Negative regulator of class I heat shock genes (grpE-dnaK-dnaJ and groELS operons). Prevents heat-shock induction of these operons. The chain is Heat-inducible transcription repressor HrcA from Bacillus subtilis (strain 168).